The following is a 176-amino-acid chain: MPADKICVARIGAPHGVRGAVKLWPFTADPLAVLDYGPLSTKDGKRSFEVETAREAKGHLVATLQGVVSREDAERLNGVELYIDRAQLPPPEEGEYYHADLIGLAAVDAAGAPIGKVLAIHNFGAGDIIEIAPPSGPTLLLPFTNAVVPTVDIASGRVVIELPAEIEGDDPAQADI.

Residues 93–166 (EGEYYHADLI…RVVIELPAEI (74 aa)) enclose the PRC barrel domain.

The protein belongs to the RimM family. As to quaternary structure, binds ribosomal protein uS19.

Its subcellular location is the cytoplasm. In terms of biological role, an accessory protein needed during the final step in the assembly of 30S ribosomal subunit, possibly for assembly of the head region. Essential for efficient processing of 16S rRNA. May be needed both before and after RbfA during the maturation of 16S rRNA. It has affinity for free ribosomal 30S subunits but not for 70S ribosomes. The chain is Ribosome maturation factor RimM from Rhodopseudomonas palustris (strain BisB18).